A 133-amino-acid chain; its full sequence is ATP synthase epsilon chain (133 aa).

The protein belongs to the ATPase epsilon chain family. As to quaternary structure, F-type ATPases have 2 components, CF(1) - the catalytic core - and CF(0) - the membrane proton channel. CF(1) has five subunits: alpha(3), beta(3), gamma(1), delta(1), epsilon(1). CF(0) has three main subunits: a, b and c.

Its subcellular location is the cell membrane. Functionally, produces ATP from ADP in the presence of a proton gradient across the membrane. The sequence is that of ATP synthase epsilon chain from Clostridium perfringens (strain ATCC 13124 / DSM 756 / JCM 1290 / NCIMB 6125 / NCTC 8237 / Type A).